The following is a 398-amino-acid chain: Bone morphogenetic protein 2-B (398 aa).

The signal sequence occupies residues 1-23 (MVAGIHSLLLLQFYQILLSGCTG). A propeptide spanning residues 24-284 (LVPEEGKRKY…GHALHKRQKR (261 aa)) is cleaved from the precursor. N-linked (GlcNAc...) asparagine glycans are attached at residues asparagine 137, asparagine 202, asparagine 237, and asparagine 340. 3 disulfide bridges follow: cysteine 298–cysteine 363, cysteine 327–cysteine 395, and cysteine 331–cysteine 397.

It belongs to the TGF-beta family. Homodimer; disulfide-linked.

The protein localises to the secreted. Its function is as follows. Induces cartilage and bone formation. The polypeptide is Bone morphogenetic protein 2-B (bmp2-b) (Xenopus laevis (African clawed frog)).